Consider the following 230-residue polypeptide: Cytidylate kinase (230 aa).

Residue 10–18 (GPAGSGKST) participates in ATP binding.

It belongs to the cytidylate kinase family. Type 1 subfamily.

The protein localises to the cytoplasm. It carries out the reaction CMP + ATP = CDP + ADP. It catalyses the reaction dCMP + ATP = dCDP + ADP. The protein is Cytidylate kinase of Leptospira borgpetersenii serovar Hardjo-bovis (strain JB197).